The following is a 234-amino-acid chain: Dienlactone hydrolase 2 (234 aa).

Residues cysteine 143, aspartate 167, and histidine 199 contribute to the active site.

It belongs to the dienelactone hydrolase family.

It functions in the pathway xenobiotic degradation. Its function is as follows. Dienlactone hydrolase; part of the Fusarium detoxification of benzoxazolinone cluster 2 (FDB2) involved in the degradation of benzoxazolinones produced by the host plant. Maize, wheat, and rye produce the 2 benzoxazinone phytoanticipins 2,4-dihy-droxy-7-methoxy-1,4-benzoxazin-3-one (DIMBOA) and 2,4-dihydroxy-1,4-benzoxazin-3-one (DIBOA) that, due to their inherent instability once released, spontaneously degrade to the more stable corresponding benzoxazolinones, 6-methoxy-2-benzoxazolinone (MBOA) and 2-benzoxazolinone (BOA), respectively. The first step in the detoxification of benzoxazolinones involves the hydrolysis of the cyclic ester bond of benzoxazolinones by the FDB1 cluster gamma-lactamase MBL1 to aminophenols. MBL1 is able to convert BOA into 2-aminophenol (2-AP), as well as MBOA into 5-methoxy-2-aminophenol (2-AMP). The FDB2 cluster N-malonyltransferase FDB2/NAT1 then metabolizes aminophenols via N-malonylation to non-toxic malonamic acids. FDB2/NAT1 converts 2-AP into N-(2-hydroxyphenyl) malonamic acid (HPMA) and 2-AMP into N-(2-hydroxy-4-methoxyphenyl) malonamic acid (HMPMA). The duplicated dienlactone hydrolases DLH1 and DLH2 may provide redundant function for hydrolyzing the lactone moiety in the BOA molecule. The roles of the amidases and other enzymes encoded by the 2 FDB clusters have not been identified so far. This is Dienlactone hydrolase 2 from Gibberella moniliformis (strain M3125 / FGSC 7600) (Maize ear and stalk rot fungus).